The primary structure comprises 99 residues: Protein S100-A11 (99 aa).

The residue at position 1 (Met1) is an N-acetylmethionine. Thr8 bears the Phosphothreonine mark. 2 consecutive EF-hand domains span residues 10 to 47 and 53 to 88; these read RCIE…ELAA and KDPG…LAIA. Positions 29, 31, 36, 66, 68, 70, 72, and 77 each coordinate Ca(2+).

Belongs to the S-100 family. In terms of assembly, homodimer; disulfide-linked. Post-translationally, phosphorylation at Thr-8 significantly suppresses homodimerization and promotes association with NCL/nucleolin which induces nuclear translocation.

The protein localises to the cytoplasm. The protein resides in the nucleus. Functionally, facilitates the differentiation and the cornification of keratinocytes. This chain is Protein S100-A11 (S100A11), found in Sus scrofa (Pig).